The chain runs to 422 residues: Proline--tRNA ligase (422 aa).

It belongs to the class-II aminoacyl-tRNA synthetase family. ProS type 2 subfamily. In terms of assembly, homodimer.

The protein resides in the cytoplasm. It carries out the reaction tRNA(Pro) + L-proline + ATP = L-prolyl-tRNA(Pro) + AMP + diphosphate. Its function is as follows. Catalyzes the attachment of proline to tRNA(Pro) in a two-step reaction: proline is first activated by ATP to form Pro-AMP and then transferred to the acceptor end of tRNA(Pro). The sequence is that of Proline--tRNA ligase from Wolbachia pipientis wMel.